We begin with the raw amino-acid sequence, 145 residues long: Zinc finger C2H2 protein ECU06_1150 (145 aa).

Residues 35–57 (KDCARYGEAQASKHALLAHARRH) form a C2H2-type 1; atypical zinc finger. Residues 63–85 (FECHLCGKDYTRSDPLKKHLLRH) form a C2H2-type 2 zinc finger.

The protein is Zinc finger C2H2 protein ECU06_1150 of Encephalitozoon cuniculi (strain GB-M1) (Microsporidian parasite).